A 367-amino-acid chain; its full sequence is Heme A synthase (367 aa).

5 consecutive transmembrane segments (helical) span residues 12–32 (GAVR…VAVG), 99–119 (LLGR…WWQG), 127–147 (LGLL…WIMV), 163–183 (LALH…LAAG), and 198–218 (ATAL…GLVA). His-264 contacts heme. 3 helical membrane-spanning segments follow: residues 266-286 (VTAY…RLTG), 296-316 (GVVI…LLAV), and 317-337 (PLWA…MATV). His-324 provides a ligand contact to heme.

Belongs to the COX15/CtaA family. Type 2 subfamily. Interacts with CtaB. The cofactor is heme b.

The protein localises to the cell membrane. It catalyses the reaction Fe(II)-heme o + 2 A + H2O = Fe(II)-heme a + 2 AH2. Its pathway is porphyrin-containing compound metabolism; heme A biosynthesis; heme A from heme O: step 1/1. Functionally, catalyzes the conversion of heme O to heme A by two successive hydroxylations of the methyl group at C8. The first hydroxylation forms heme I, the second hydroxylation results in an unstable dihydroxymethyl group, which spontaneously dehydrates, resulting in the formyl group of heme A. The chain is Heme A synthase from Methylobacterium radiotolerans (strain ATCC 27329 / DSM 1819 / JCM 2831 / NBRC 15690 / NCIMB 10815 / 0-1).